The sequence spans 470 residues: Putative multidrug resistance protein MdtD (470 aa).

Residues 1–11 (MTEFPDNTRWQ) are Periplasmic-facing. Residues 12 to 32 (LWIVAFGFFMQSLDTTIVNTA) form a helical membrane-spanning segment. Over 33–48 (LPSMAKSLGESPLHMH) the chain is Cytoplasmic. Residues 49 to 69 (MVVVSYVLTVAVMLPASGWLA) traverse the membrane as a helical segment. At 70–76 (DKIGVRN) the chain is on the periplasmic side. A helical transmembrane segment spans residues 77 to 97 (IFFAAIVLFTLGSLFCALSGT). At 98–101 (LNQL) the chain is on the cytoplasmic side. Residues 102–124 (VLARVLQGVGGAMMVPVGRLTVM) form a helical membrane-spanning segment. Residues 125–137 (KIVPRAQYMAAMT) are Periplasmic-facing. The helical transmembrane segment at 138 to 158 (FVALPGQIGPLLGPALGGVLV) threads the bilayer. The Cytoplasmic segment spans residues 159 to 164 (EYASWH). Residues 165 to 185 (WIFLINIPVGIVGAMATFMLM) traverse the membrane as a helical segment. At 186–196 (PNYTIETRRFD) the chain is on the periplasmic side. A helical transmembrane segment spans residues 197 to 217 (LPGFLLLAIGMAVLTLALDGS). Over 218 to 224 (KSMGISP) the chain is Cytoplasmic. A helical membrane pass occupies residues 225–245 (WTLAGLAAGGAAAILLYLFHA). Over 246 to 262 (KKNSGALFSLRLFRTPT) the chain is Periplasmic. Residues 263–283 (FSLGLLGSFAGRIGSGMLPFM) form a helical membrane-spanning segment. Over 284–285 (TP) the chain is Cytoplasmic. Residues 286 to 306 (VFLQIGLGFSPFHAGLMMIPM) form a helical membrane-spanning segment. At 307 to 341 (VLGSMGMKRIVVQIVNRFGYRRVLVATTLGLALVS) the chain is on the periplasmic side. Residues 342–362 (LLFMSVALLGWYYLLPLVLLL) traverse the membrane as a helical segment. At 363–395 (QGMVNSARFSSMNTLTLKDLPDTLASSGNSLLS) the chain is on the cytoplasmic side. The helical transmembrane segment at 396–416 (MIMQLSMSIGVTIAGMLLGMF) threads the bilayer. Residues 417–430 (GQQHIGIDSSATHH) are Periplasmic-facing. Residues 431–451 (VFMYTWLCMAVIIALPAIIFA) traverse the membrane as a helical segment. The Cytoplasmic portion of the chain corresponds to 452-470 (RVPNDTQQNMVISRRKRSL).

The protein belongs to the major facilitator superfamily. TCR/Tet family.

It localises to the cell inner membrane. In Salmonella typhi, this protein is Putative multidrug resistance protein MdtD.